The primary structure comprises 502 residues: Mannitol dehydrogenase 2 (502 aa).

The protein belongs to the mannitol dehydrogenase family.

The catalysed reaction is D-mannitol + NAD(+) = D-fructose + NADH + H(+). Its function is as follows. Catalyzes the NAD(H)-dependent interconversion of D-fructose and D-mannitol in the mannitol metabolic pathway. This Saccharomyces cerevisiae (strain ATCC 204508 / S288c) (Baker's yeast) protein is Mannitol dehydrogenase 2.